The primary structure comprises 710 residues: Fatty acid oxidation complex subunit alpha (710 aa).

The tract at residues 1 to 190 (MSMEKTFNLA…KMGLVNDVVP (190 aa)) is enoyl-CoA hydratase. A 3-hydroxyacyl-CoA dehydrogenase region spans residues 310-710 (RKVKKVMVLG…ASDGSQFYKK (401 aa)).

In the N-terminal section; belongs to the enoyl-CoA hydratase/isomerase family. It in the central section; belongs to the 3-hydroxyacyl-CoA dehydrogenase family. Heterotetramer of two alpha chains (FadJ) and two beta chains (FadI).

It is found in the cytoplasm. It catalyses the reaction a (3S)-3-hydroxyacyl-CoA = a (2E)-enoyl-CoA + H2O. The enzyme catalyses a 4-saturated-(3S)-3-hydroxyacyl-CoA = a (3E)-enoyl-CoA + H2O. The catalysed reaction is a (3S)-3-hydroxyacyl-CoA + NAD(+) = a 3-oxoacyl-CoA + NADH + H(+). It carries out the reaction (3S)-3-hydroxybutanoyl-CoA = (3R)-3-hydroxybutanoyl-CoA. The protein operates within lipid metabolism; fatty acid beta-oxidation. In terms of biological role, catalyzes the formation of a hydroxyacyl-CoA by addition of water on enoyl-CoA. Also exhibits 3-hydroxyacyl-CoA epimerase and 3-hydroxyacyl-CoA dehydrogenase activities. The sequence is that of Fatty acid oxidation complex subunit alpha from Shewanella frigidimarina (strain NCIMB 400).